Reading from the N-terminus, the 248-residue chain is Adenosylcobinamide-GDP ribazoletransferase (248 aa).

Transmembrane regions (helical) follow at residues 28-48 (LFWFPVVGLFLGLLQAGAGYL), 103-123 (VGSFGAIGLILLFLFKSIVLV), 126-146 (LAFGLYPWIVSGVLLARLVQV), 169-189 (AGIQHFVAAFLVALFILLLLM), 193-213 (MLPSGIGLSAAIAGAVLMSLL), and 225-245 (VLGASSEFTEVLVWVSGVFLA).

Belongs to the CobS family. Mg(2+) serves as cofactor.

The protein localises to the cell inner membrane. The enzyme catalyses alpha-ribazole + adenosylcob(III)inamide-GDP = adenosylcob(III)alamin + GMP + H(+). It carries out the reaction alpha-ribazole 5'-phosphate + adenosylcob(III)inamide-GDP = adenosylcob(III)alamin 5'-phosphate + GMP + H(+). Its pathway is cofactor biosynthesis; adenosylcobalamin biosynthesis; adenosylcobalamin from cob(II)yrinate a,c-diamide: step 7/7. Its function is as follows. Joins adenosylcobinamide-GDP and alpha-ribazole to generate adenosylcobalamin (Ado-cobalamin). Also synthesizes adenosylcobalamin 5'-phosphate from adenosylcobinamide-GDP and alpha-ribazole 5'-phosphate. The protein is Adenosylcobinamide-GDP ribazoletransferase of Chlorobium phaeobacteroides (strain BS1).